The primary structure comprises 284 residues: Bifunctional protein FolD (284 aa).

NADP(+)-binding positions include 166-168 and Ile232; that span reads GAS.

The protein belongs to the tetrahydrofolate dehydrogenase/cyclohydrolase family. As to quaternary structure, homodimer.

It carries out the reaction (6R)-5,10-methylene-5,6,7,8-tetrahydrofolate + NADP(+) = (6R)-5,10-methenyltetrahydrofolate + NADPH. The catalysed reaction is (6R)-5,10-methenyltetrahydrofolate + H2O = (6R)-10-formyltetrahydrofolate + H(+). It functions in the pathway one-carbon metabolism; tetrahydrofolate interconversion. Functionally, catalyzes the oxidation of 5,10-methylenetetrahydrofolate to 5,10-methenyltetrahydrofolate and then the hydrolysis of 5,10-methenyltetrahydrofolate to 10-formyltetrahydrofolate. The polypeptide is Bifunctional protein FolD (Pseudomonas fluorescens (strain Pf0-1)).